Consider the following 862-residue polypeptide: DNA mismatch repair protein MutS (862 aa).

ATP is bound at residue Gly-608–Ser-615.

It belongs to the DNA mismatch repair MutS family.

Functionally, this protein is involved in the repair of mismatches in DNA. It is possible that it carries out the mismatch recognition step. This protein has a weak ATPase activity. In Bacteroides fragilis (strain YCH46), this protein is DNA mismatch repair protein MutS.